The sequence spans 135 residues: Putative nickel-responsive regulator (135 aa).

Ni(2+) contacts are provided by His79, His90, His92, and Cys98.

It belongs to the transcriptional regulatory CopG/NikR family. Ni(2+) is required as a cofactor.

In terms of biological role, transcriptional regulator. The sequence is that of Putative nickel-responsive regulator from Dictyoglomus thermophilum (strain ATCC 35947 / DSM 3960 / H-6-12).